Here is a 547-residue protein sequence, read N- to C-terminus: Membrane transporter D1 (547 aa).

Residues 1 to 2 (MR) lie on the Cytoplasmic side of the membrane. Residues 3-25 (ASVMLCAALGGFLFGYDTGVINA) traverse the membrane as a helical segment. Over 26-43 (ALFQMKDHFGFSEHSWQY) the chain is Extracellular. Residues 44 to 64 (ALIVAIAIAGAFVGAFISGFI) form a helical membrane-spanning segment. Over 65 to 78 (SAAFGRRPCIAVAD) the chain is Cytoplasmic. Residues 79–99 (ALFVIGSVLMGAAPNVEVVLV) traverse the membrane as a helical segment. The Extracellular portion of the chain corresponds to 100-101 (SR). A helical transmembrane segment spans residues 102 to 122 (VIVGLAIGISSATIPVYLAEV). Over 123–136 (TSPKHRGATIVLNN) the chain is Cytoplasmic. Residues 137-157 (LFLTGGQFVAAGFTAIMVVFT) form a helical membrane-spanning segment. The Extracellular portion of the chain corresponds to 158 to 164 (SKNIGWR). The helical transmembrane segment at 165 to 185 (VAIGIGALPAVVQAFCLLFFL) threads the bilayer. Residues 186-245 (PESPRWLLSKGHADRAKAVADKFEVDLCEFQEGDELPSVRIDYRPLMARDMRFRVVLSSG) lie on the Cytoplasmic side of the membrane. The chain crosses the membrane as a helical span at residues 246–266 (LQIIQQFSGINTIMYYSSVIL). Residues 267–276 (YDAGFRDAIM) lie on the Extracellular side of the membrane. Residues 277–297 (PVVLSIPLAFMNALFTAVAIF) traverse the membrane as a helical segment. The Cytoplasmic segment spans residues 298-308 (TVDRFGRRRML). A helical transmembrane segment spans residues 309–329 (LISVFGCLVLLVVIAIIGFFI). Residues 330 to 339 (GTRISYSVGG) lie on the Extracellular side of the membrane. The chain crosses the membrane as a helical span at residues 340-360 (GLFLALLAVFLALYAPGIGCI). At 361-385 (PWVIMGEIFPTHLRTSAASVATMAN) the chain is on the cytoplasmic side. Residues 386–406 (WGANVLVSQVFPILMGAIGVG) traverse the membrane as a helical segment. Residue G407 is a topological domain, extracellular. The helical transmembrane segment at 408–428 (TFTIISGLMALGCIFVYFFAV) threads the bilayer. Residues 429–547 (ETKGLTLEQI…AIKAAPHEPK (119 aa)) are Cytoplasmic-facing. 2 disordered regions span residues 449 to 468 (PPRFHEEGESGESGAGYRED) and 510 to 547 (VSNKFEERATSSSSDPQSLENQDEVRQAAIKAAPHEPK). The span at 519-529 (TSSSSDPQSLE) shows a compositional bias: polar residues.

It belongs to the major facilitator superfamily. Sugar transporter (TC 2.A.1.1) family.

Its subcellular location is the membrane. In Leishmania donovani, this protein is Membrane transporter D1.